The primary structure comprises 1564 residues: NACHT domain- and WD repeat-containing protein 1 (1564 aa).

Residues threonine 335–valine 661 enclose the NACHT domain. Glycine 341–threonine 348 lines the ATP pocket. 14 WD repeats span residues glycine 866–methionine 905, glycine 908–threonine 947, proline 956–histidine 994, aspartate 998–lysine 1037, lysine 1044–lysine 1082, leucine 1083–methionine 1121, glutamate 1126–aspartate 1165, leucine 1167–valine 1207, leucine 1212–serine 1251, aspartate 1253–valine 1290, isoleucine 1291–isoleucine 1327, glycine 1338–cysteine 1376, lysine 1380–glutamine 1418, and glutamate 1425–valine 1462.

As to quaternary structure, may interact with HSP90AA1, HSP90AB1 and BAG2. In terms of tissue distribution, expressed at highest levels in prostate, followed by testis, retina, trachea and optic nerve. Also detected in brain, epididymis, lung, vagina and pituitary. In the prostate, tends to be up-regulated during malignant progression compared to normal epithelium (at protein level).

Its subcellular location is the cytoplasm. It localises to the cytosol. May play a role in the control of androgen receptor (AR) protein steady-state levels. The polypeptide is NACHT domain- and WD repeat-containing protein 1 (NWD1) (Homo sapiens (Human)).